Reading from the N-terminus, the 97-residue chain is Putative membrane protein insertion efficiency factor (97 aa).

This sequence belongs to the UPF0161 family.

The protein resides in the cell membrane. In terms of biological role, could be involved in insertion of integral membrane proteins into the membrane. The sequence is that of Putative membrane protein insertion efficiency factor from Lactobacillus gasseri (strain ATCC 33323 / DSM 20243 / BCRC 14619 / CIP 102991 / JCM 1131 / KCTC 3163 / NCIMB 11718 / NCTC 13722 / AM63).